A 378-amino-acid polypeptide reads, in one-letter code: UPF0754 membrane protein SH1116 (378 aa).

The next 2 helical transmembrane spans lie at 4-24 and 358-378; these read FLVI…TNVI and SLGF…AIFV.

The protein belongs to the UPF0754 family.

Its subcellular location is the cell membrane. The polypeptide is UPF0754 membrane protein SH1116 (Staphylococcus haemolyticus (strain JCSC1435)).